A 119-amino-acid chain; its full sequence is uncharacterized protein (119 aa).

The interval 55–119 (LSTEPPTPPS…SRLPPRSWTN (65 aa)) is disordered. Residues 81-92 (LSYTRCHSTTYT) are compositionally biased toward polar residues.

This is an uncharacterized protein from Saccharomyces cerevisiae (strain ATCC 204508 / S288c) (Baker's yeast).